The sequence spans 104 residues: NADH-quinone oxidoreductase subunit K (104 aa).

Transmembrane regions (helical) follow at residues 4-24 (VPASAYLTLAIILFCIGLFGA), 31-51 (VIVLVCIELMLNAANLNLVAF), and 67-87 (LFTMAVAAAEAAVGLAILIAL).

The protein belongs to the complex I subunit 4L family. NDH-1 is composed of 14 different subunits. Subunits NuoA, H, J, K, L, M, N constitute the membrane sector of the complex.

Its subcellular location is the cell membrane. It catalyses the reaction a quinone + NADH + 5 H(+)(in) = a quinol + NAD(+) + 4 H(+)(out). Functionally, NDH-1 shuttles electrons from NADH, via FMN and iron-sulfur (Fe-S) centers, to quinones in the respiratory chain. The immediate electron acceptor for the enzyme in this species is believed to be a menaquinone. Couples the redox reaction to proton translocation (for every two electrons transferred, four hydrogen ions are translocated across the cytoplasmic membrane), and thus conserves the redox energy in a proton gradient. This is NADH-quinone oxidoreductase subunit K from Bacillus cereus (strain Q1).